The chain runs to 446 residues: Adenylosuccinate synthetase (446 aa).

GTP-binding positions include 20–26 (GDEGKGK) and 48–50 (GHT). Catalysis depends on Asp-21, which acts as the Proton acceptor. Mg(2+) contacts are provided by Asp-21 and Gly-48. IMP contacts are provided by residues 21-24 (DEGK), 46-49 (NAGH), Thr-137, Arg-151, Gln-232, Thr-247, and Arg-319. The active-site Proton donor is His-49. 315–321 (SVTGRPR) is a binding site for substrate. GTP-binding positions include Arg-321, 347-349 (KLD), and 429-431 (STG).

It belongs to the adenylosuccinate synthetase family. Homodimer. It depends on Mg(2+) as a cofactor.

Its subcellular location is the cytoplasm. The catalysed reaction is IMP + L-aspartate + GTP = N(6)-(1,2-dicarboxyethyl)-AMP + GDP + phosphate + 2 H(+). It participates in purine metabolism; AMP biosynthesis via de novo pathway; AMP from IMP: step 1/2. Its function is as follows. Plays an important role in the de novo pathway of purine nucleotide biosynthesis. Catalyzes the first committed step in the biosynthesis of AMP from IMP. In Polynucleobacter necessarius subsp. necessarius (strain STIR1), this protein is Adenylosuccinate synthetase.